Reading from the N-terminus, the 1126-residue chain is NUT family member 1 (1126 aa).

Disordered stretches follow at residues 1-56 (MASD…PVFS), 334-367 (IPKK…IPPE), 475-515 (EDAQ…QGAA), 537-559 (QEQT…SPSS), 664-692 (AGML…DDRG), 755-810 (ALNS…GPGL), and 932-1014 (GEGR…EELS). Residues 30 to 55 (FAPPPPVPPDQPLWEPSPQPPIPPVF) show a composition bias toward pro residues. Residues 338–353 (AASKTRAPRRRQRKPQ) are compositionally biased toward basic residues. A compositionally biased stretch (polar residues) spans 962 to 975 (KLTNGQGQGSTSPR). Residue S973 is modified to Phosphoserine. The span at 987–1005 (TPIKEKCTSADRAKRRETE) shows a compositional bias: basic and acidic residues. S1022, S1025, and S1027 each carry phosphoserine. Residues 1032–1126 (PLSTRQASGG…SKRKKRRRSQ (95 aa)) are disordered. Q1042 carries the N5-methylglutamine modification. A compositionally biased stretch (basic residues) spans 1106 to 1126 (PRKRRRDGFVTSKRKKRRRSQ).

It belongs to the NUT family. In terms of processing, methylated at Gln-1042 by N6AMT1. Post-translationally, phosphorylation on Ser-1022, Ser-1025 or Ser-1027 is important for cytoplasmic export.

It localises to the cytoplasm. The protein resides in the nucleus. In terms of biological role, plays a role in the regulation of proliferation. Regulates TERT expression by modulating SP1 binding to TERT promoter binding sites. The protein is NUT family member 1 of Mus musculus (Mouse).